Consider the following 343-residue polypeptide: Ribosomal RNA small subunit methyltransferase C (343 aa).

This sequence belongs to the methyltransferase superfamily. RsmC family. As to quaternary structure, monomer.

Its subcellular location is the cytoplasm. It carries out the reaction guanosine(1207) in 16S rRNA + S-adenosyl-L-methionine = N(2)-methylguanosine(1207) in 16S rRNA + S-adenosyl-L-homocysteine + H(+). Its function is as follows. Specifically methylates the guanine in position 1207 of 16S rRNA in the 30S particle. The protein is Ribosomal RNA small subunit methyltransferase C of Escherichia coli (strain 55989 / EAEC).